The following is a 491-amino-acid chain: Probable glycine dehydrogenase (decarboxylating) subunit 2 (491 aa).

Position 273 is an N6-(pyridoxal phosphate)lysine (lysine 273).

It belongs to the GcvP family. C-terminal subunit subfamily. The glycine cleavage system is composed of four proteins: P, T, L and H. In this organism, the P 'protein' is a heterodimer of two subunits. Pyridoxal 5'-phosphate serves as cofactor.

The catalysed reaction is N(6)-[(R)-lipoyl]-L-lysyl-[glycine-cleavage complex H protein] + glycine + H(+) = N(6)-[(R)-S(8)-aminomethyldihydrolipoyl]-L-lysyl-[glycine-cleavage complex H protein] + CO2. In terms of biological role, the glycine cleavage system catalyzes the degradation of glycine. The P protein binds the alpha-amino group of glycine through its pyridoxal phosphate cofactor; CO(2) is released and the remaining methylamine moiety is then transferred to the lipoamide cofactor of the H protein. In Bacillus anthracis (strain A0248), this protein is Probable glycine dehydrogenase (decarboxylating) subunit 2.